The chain runs to 366 residues: Aminomethyltransferase (366 aa).

This sequence belongs to the GcvT family. The glycine cleavage system is composed of four proteins: P, T, L and H.

The catalysed reaction is N(6)-[(R)-S(8)-aminomethyldihydrolipoyl]-L-lysyl-[protein] + (6S)-5,6,7,8-tetrahydrofolate = N(6)-[(R)-dihydrolipoyl]-L-lysyl-[protein] + (6R)-5,10-methylene-5,6,7,8-tetrahydrofolate + NH4(+). Its function is as follows. The glycine cleavage system catalyzes the degradation of glycine. In Bordetella pertussis (strain Tohama I / ATCC BAA-589 / NCTC 13251), this protein is Aminomethyltransferase.